Consider the following 373-residue polypeptide: Probable tRNA sulfurtransferase (373 aa).

In terms of domain architecture, THUMP spans 54–158 (NKNIEELSKV…NDVAYFYHKI (105 aa)). ATP contacts are provided by residues 176-177 (LF), 201-202 (NF), K256, G278, and Q287.

Belongs to the ThiI family.

It localises to the cytoplasm. The enzyme catalyses [ThiI sulfur-carrier protein]-S-sulfanyl-L-cysteine + a uridine in tRNA + 2 reduced [2Fe-2S]-[ferredoxin] + ATP + H(+) = [ThiI sulfur-carrier protein]-L-cysteine + a 4-thiouridine in tRNA + 2 oxidized [2Fe-2S]-[ferredoxin] + AMP + diphosphate. It carries out the reaction [ThiS sulfur-carrier protein]-C-terminal Gly-Gly-AMP + S-sulfanyl-L-cysteinyl-[cysteine desulfurase] + AH2 = [ThiS sulfur-carrier protein]-C-terminal-Gly-aminoethanethioate + L-cysteinyl-[cysteine desulfurase] + A + AMP + 2 H(+). Its pathway is cofactor biosynthesis; thiamine diphosphate biosynthesis. Catalyzes the ATP-dependent transfer of a sulfur to tRNA to produce 4-thiouridine in position 8 of tRNAs, which functions as a near-UV photosensor. Also catalyzes the transfer of sulfur to the sulfur carrier protein ThiS, forming ThiS-thiocarboxylate. This is a step in the synthesis of thiazole, in the thiamine biosynthesis pathway. The sulfur is donated as persulfide by IscS. The polypeptide is Probable tRNA sulfurtransferase (Saccharolobus islandicus (strain M.16.4 / Kamchatka #3) (Sulfolobus islandicus)).